Here is a 326-residue protein sequence, read N- to C-terminus: Microtubule-associated protein RP/EB family member 2 (326 aa).

Position 9 is a phosphoserine (serine 9). A Calponin-homology (CH) domain is found at threonine 56–aspartate 158. A Phosphotyrosine modification is found at tyrosine 166. 2 disordered regions span residues glutamate 170 to leucine 239 and alanine 298 to tyrosine 326. A DCTN1-binding region spans residues glutamine 186–tyrosine 326. A compositionally biased stretch (low complexity) spans serine 199–serine 233. A phosphoserine mark is found at serine 218 and serine 235. Positions serine 235 to histidine 305 constitute an EB1 C-terminal domain. Residues glutamate 258 to glutamate 301 are APC-binding. Positions serine 299–histidine 316 are enriched in basic and acidic residues. The span at glutamate 317–tyrosine 326 shows a compositional bias: low complexity.

It belongs to the MAPRE family. As to quaternary structure, interacts with DCTN1. Interacts with APC (via C-terminal). Interacts with monomeric and polymerized tubulin. Interacts with SLAIN1. Interacts (via the N-terminal region) with BAG1. Interacts with ASB14. Interacts with HAX1; this interaction is essential for epidermal cell migration. Post-translationally, phosphorylated at Ser-235 by CK2 leading to enhanced cell adhesion. Phosphorylated by CDK1 and AURKB during mitosis reduces the binding affinity of MAPRE2 for microtubules. In terms of processing, ubiquitinated in an ASB14-dependent manner; leading to proteasomal degradation.

The protein localises to the cytoplasm. It is found in the cytoskeleton. Its function is as follows. Adapter protein that is involved in microtubule polymerization, and spindle function by stabilizing microtubules and anchoring them at centrosomes. Therefore, ensures mitotic progression and genome stability. Acts as a central regulator of microtubule reorganization in apico-basal epithelial differentiation. Plays a role during oocyte meiosis by regulating microtubule dynamics. Participates in neurite growth by interacting with plexin B3/PLXNB3 and microtubule reorganization during apico-basal epithelial differentiation. Also plays an essential role for cell migration and focal adhesion dynamics. Mechanistically, recruits HAX1 to microtubules in order to regulate focal adhesion dynamics. The polypeptide is Microtubule-associated protein RP/EB family member 2 (MAPRE2) (Bos taurus (Bovine)).